We begin with the raw amino-acid sequence, 363 residues long: Phosphoserine aminotransferase (363 aa).

Arg42 provides a ligand contact to L-glutamate. Pyridoxal 5'-phosphate is bound by residues 76 to 77, Trp102, Thr156, Asp175, and Gln198; that span reads GR. Position 199 is an N6-(pyridoxal phosphate)lysine (Lys199). 240 to 241 provides a ligand contact to pyridoxal 5'-phosphate; that stretch reads NT.

This sequence belongs to the class-V pyridoxal-phosphate-dependent aminotransferase family. SerC subfamily. In terms of assembly, homodimer. Requires pyridoxal 5'-phosphate as cofactor.

The protein localises to the cytoplasm. It catalyses the reaction O-phospho-L-serine + 2-oxoglutarate = 3-phosphooxypyruvate + L-glutamate. It carries out the reaction 4-(phosphooxy)-L-threonine + 2-oxoglutarate = (R)-3-hydroxy-2-oxo-4-phosphooxybutanoate + L-glutamate. It functions in the pathway amino-acid biosynthesis; L-serine biosynthesis; L-serine from 3-phospho-D-glycerate: step 2/3. Its pathway is cofactor biosynthesis; pyridoxine 5'-phosphate biosynthesis; pyridoxine 5'-phosphate from D-erythrose 4-phosphate: step 3/5. Functionally, catalyzes the reversible conversion of 3-phosphohydroxypyruvate to phosphoserine and of 3-hydroxy-2-oxo-4-phosphonooxybutanoate to phosphohydroxythreonine. The protein is Phosphoserine aminotransferase of Shewanella sp. (strain MR-4).